Here is a 648-residue protein sequence, read N- to C-terminus: Transcription termination factor FttA (648 aa).

Positions 1–179 (MIKRETQVDQ…QVGRNIYRKP (179 aa)) are not required for dimerization, required for cleavage at some sites. The segment at 9–76 (DQILKDIRGI…ISIRPDPDVL (68 aa)) is KHa. The tract at residues 77-144 (LPPEEAEKLI…WAPKVVRTPP (68 aa)) is KHb. The segment at 185-395 (WIRITGLGGF…LVMESTYGGA (211 aa)) is metallo-beta-lactamase N-terminus. Positions 253, 255, 257, 258, 341, and 364 each coordinate Zn(2+). Residues 396 to 589 (NDIQMPREEA…MEVHTIDGFS (194 aa)) form a beta-Casp region. Residues 590–648 (GHADRRELMNYVAKVRPRPERVITVHGEPQKCLDLATSIHRKFGLSTRAPNNLDTIRLR) are metallo-beta-lactamase C-terminus. Zn(2+) is bound at residue histidine 615.

The protein belongs to the metallo-beta-lactamase superfamily. RNA-metabolizing metallo-beta-lactamase-like family. FttA subfamily. Homodimer. Interacts with RNA polymerase (RNAP), interacts with the Spt4-Spt5 complex. Zn(2+) is required as a cofactor.

With respect to regulation, endoRNase activity is inhibited by 1,10-phenanthroline. In terms of biological role, terminates transcription on the whole genome. Termination is linked to FttA-mediated RNA cleavage and does not require NTP hydrolysis. Cleaves endonucleolytically at the RNA exit channel of RNA polymerase (RNAP); the 5'-3' exonuclease activity of this protein degrades the nascent RNA released from RNAP. A single-stranded endoribonuclease (endoRNase) with a preference for cleavage at CA dinucleotides. Has 5'-3' exoribonuclease (exoRNase) activity on 5'-monophosphorylated RNA; this activity does not occur on 5'-tri-phosphorylated or 5'-OH substrates. Also has weak activity 5'-3' exodeoxyribonuclease activity on ssDNA. In Pyrococcus abyssi (strain GE5 / Orsay), this protein is Transcription termination factor FttA.